The chain runs to 288 residues: Inorganic pyrophosphatase (288 aa).

Arg-80 is a binding site for diphosphate. The Mg(2+) site is built by Asp-117, Asp-122, and Asp-154. A disordered region spans residues 252–271 (TPSYSDAAAQEIPSASPAPA). Positions 258–271 (AAAQEIPSASPAPA) are enriched in low complexity.

Belongs to the PPase family. Mg(2+) serves as cofactor.

It localises to the cytoplasm. The enzyme catalyses diphosphate + H2O = 2 phosphate + H(+). This Candida albicans (strain SC5314 / ATCC MYA-2876) (Yeast) protein is Inorganic pyrophosphatase (IPP1).